The primary structure comprises 211 residues: Thiamine-phosphate synthase (211 aa).

4-amino-2-methyl-5-(diphosphooxymethyl)pyrimidine-binding positions include 35–39 (QLRDK) and Asn67. Asp68 and Asp87 together coordinate Mg(2+). Ser106 provides a ligand contact to 4-amino-2-methyl-5-(diphosphooxymethyl)pyrimidine. 132–134 (TGS) is a 2-[(2R,5Z)-2-carboxy-4-methylthiazol-5(2H)-ylidene]ethyl phosphate binding site. A 4-amino-2-methyl-5-(diphosphooxymethyl)pyrimidine-binding site is contributed by Lys135. 2-[(2R,5Z)-2-carboxy-4-methylthiazol-5(2H)-ylidene]ethyl phosphate is bound by residues Gly163 and 183 to 184 (IS).

The protein belongs to the thiamine-phosphate synthase family. Requires Mg(2+) as cofactor.

It carries out the reaction 2-[(2R,5Z)-2-carboxy-4-methylthiazol-5(2H)-ylidene]ethyl phosphate + 4-amino-2-methyl-5-(diphosphooxymethyl)pyrimidine + 2 H(+) = thiamine phosphate + CO2 + diphosphate. The enzyme catalyses 2-(2-carboxy-4-methylthiazol-5-yl)ethyl phosphate + 4-amino-2-methyl-5-(diphosphooxymethyl)pyrimidine + 2 H(+) = thiamine phosphate + CO2 + diphosphate. It catalyses the reaction 4-methyl-5-(2-phosphooxyethyl)-thiazole + 4-amino-2-methyl-5-(diphosphooxymethyl)pyrimidine + H(+) = thiamine phosphate + diphosphate. It participates in cofactor biosynthesis; thiamine diphosphate biosynthesis; thiamine phosphate from 4-amino-2-methyl-5-diphosphomethylpyrimidine and 4-methyl-5-(2-phosphoethyl)-thiazole: step 1/1. Its function is as follows. Condenses 4-methyl-5-(beta-hydroxyethyl)thiazole monophosphate (THZ-P) and 2-methyl-4-amino-5-hydroxymethyl pyrimidine pyrophosphate (HMP-PP) to form thiamine monophosphate (TMP). The chain is Thiamine-phosphate synthase from Methanoculleus marisnigri (strain ATCC 35101 / DSM 1498 / JR1).